The sequence spans 263 residues: Probable esterase PIR7A (263 aa).

Ser82 (acyl-ester intermediate) is an active-site residue. Active-site charge relay system residues include Asp213 and His241.

The protein belongs to the AB hydrolase superfamily.

This Oryza sativa subsp. indica (Rice) protein is Probable esterase PIR7A (PIR7A).